A 489-amino-acid chain; its full sequence is Trehalose-6-phosphate synthase (489 aa).

Arg-22 provides a ligand contact to D-glucose 6-phosphate. 42 to 43 (GG) provides a ligand contact to UDP-alpha-D-glucose. Positions 94 and 148 each coordinate D-glucose 6-phosphate. Residues Arg-290 and Lys-295 each contribute to the UDP-alpha-D-glucose site. Position 328 (Arg-328) interacts with D-glucose 6-phosphate. Position 393-397 (393-397 (LVAKE)) interacts with UDP-alpha-D-glucose.

This sequence belongs to the glycosyltransferase 20 family. In terms of assembly, homotetramer.

The catalysed reaction is ADP-alpha-D-glucose + D-glucose 6-phosphate = alpha,alpha-trehalose 6-phosphate + ADP + H(+). It catalyses the reaction CDP-alpha-D-glucose + D-glucose 6-phosphate = alpha,alpha-trehalose 6-phosphate + CDP + H(+). The enzyme catalyses GDP-alpha-D-glucose + D-glucose 6-phosphate = alpha,alpha-trehalose 6-phosphate + GDP + H(+). It carries out the reaction TDP-alpha-D-glucose + D-glucose 6-phosphate = 5-methyl-UDP + alpha,alpha-trehalose 6-phosphate + H(+). The catalysed reaction is D-glucose 6-phosphate + UDP-alpha-D-glucose = alpha,alpha-trehalose 6-phosphate + UDP + H(+). Its pathway is glycan biosynthesis; trehalose biosynthesis. Probably involved in the osmoprotection via the biosynthesis of trehalose and in the production of glycogen and alpha-glucan via the TreS-Pep2 branch involved in the biosynthesis of maltose-1-phosphate (M1P). Catalyzes the transfer of glucose from UDP-glucose (UDP-Glc) to D-glucose 6-phosphate (Glc-6-P) to form trehalose-6-phosphate. Probably also able to use ADP-Glc, CDP-Glc, GDP-Glc and TDP-Glc as glucosyl donors. In Mycobacterium sp. (strain KMS), this protein is Trehalose-6-phosphate synthase.